A 118-amino-acid polypeptide reads, in one-letter code: Protein Rev (118 aa).

The residue at position 5 (S5) is a Phosphoserine; by host CK2. The interval 18–26 is homomultimerization; it reads LIKILYQSN. Positions 23–49 are disordered; the sequence is YQSNPPPSPEGTRQARRNRRRRWRARQ. Residues 34–50 carry the Nuclear localization signal and RNA-binding (RRE) motif; it reads TRQARRNRRRRWRARQR. The segment covering 36–49 has biased composition (basic residues); the sequence is QARRNRRRRWRARQ. Residues 73–84 carry the Nuclear export signal and binding to XPO1 motif; it reads LQLPPLERLNLN. A disordered region spans residues 89–118; sequence CGASGTQGVGSPQISVESPTVLESGTEEQC. A phosphoserine; by host mark is found at S92 and S99. Polar residues predominate over residues 92–112; the sequence is SGTQGVGSPQISVESPTVLES.

This sequence belongs to the HIV-1 REV protein family. As to quaternary structure, homomultimer; when bound to the RRE. Multimeric assembly is essential for activity and may involve XPO1. Binds to human KPNB1, XPO1, TNPO1, RANBP5 and IPO7. Interacts with the viral Integrase. Interacts with human KHDRBS1. Interacts with human NAP1; this interaction decreases Rev multimerization and stimulates its activity. Interacts with human DEAD-box helicases DDX3 and DDX24; these interactions may serve for viral RNA export to the cytoplasm and packaging, respectively. Interacts with human PSIP1; this interaction may inhibit HIV-1 DNA integration by promoting dissociation of the Integrase-LEDGF/p75 complex. Post-translationally, asymmetrically arginine dimethylated at one site by host PRMT6. Methylation impairs the RNA-binding activity and export of viral RNA from the nucleus to the cytoplasm. In terms of processing, phosphorylated by protein kinase CK2. Presence of, and maybe binding to the N-terminus of the regulatory beta subunit of CK2 is necessary for CK2-mediated Rev's phosphorylation.

Its subcellular location is the host nucleus. It is found in the host nucleolus. It localises to the host cytoplasm. Escorts unspliced or incompletely spliced viral pre-mRNAs (late transcripts) out of the nucleus of infected cells. These pre-mRNAs carry a recognition sequence called Rev responsive element (RRE) located in the env gene, that is not present in fully spliced viral mRNAs (early transcripts). This function is essential since most viral proteins are translated from unspliced or partially spliced pre-mRNAs which cannot exit the nucleus by the pathway used by fully processed cellular mRNAs. Rev itself is translated from a fully spliced mRNA that readily exits the nucleus. Rev's nuclear localization signal (NLS) binds directly to KPNB1/Importin beta-1 without previous binding to KPNA1/Importin alpha-1. KPNB1 binds to the GDP bound form of RAN (Ran-GDP) and targets Rev to the nucleus. In the nucleus, the conversion from Ran-GDP to Ran-GTP dissociates Rev from KPNB1 and allows Rev's binding to the RRE in viral pre-mRNAs. Rev multimerization on the RRE via cooperative assembly exposes its nuclear export signal (NES) to the surface. Rev can then form a complex with XPO1/CRM1 and Ran-GTP, leading to nuclear export of the complex. Conversion from Ran-GTP to Ran-GDP mediates dissociation of the Rev/RRE/XPO1/RAN complex, so that Rev can return to the nucleus for a subsequent round of export. Beside KPNB1, also seems to interact with TNPO1/Transportin-1, RANBP5/IPO5 and IPO7/RANBP7 for nuclear import. The nucleoporin-like HRB/RIP is an essential cofactor that probably indirectly interacts with Rev to release HIV RNAs from the perinuclear region to the cytoplasm. The protein is Protein Rev of Human immunodeficiency virus type 1 group M subtype D (isolate Z2/CDC-Z34) (HIV-1).